Here is a 122-residue protein sequence, read N- to C-terminus: Acidic phospholipase A2 CbIalpha (122 aa).

7 cysteine pairs are disulfide-bonded: C26/C115, C28/C44, C43/C95, C49/C122, C50/C88, C57/C81, and C75/C86. Residues Y27, G29, and G31 each coordinate Ca(2+). H47 is a catalytic residue. Position 48 (D48) interacts with Ca(2+). Residue D89 is part of the active site.

The protein belongs to the phospholipase A2 family. Group II subfamily. D49 sub-subfamily. As to quaternary structure, heterodimer of an acidic subunit (CbIalpha or CbIbeta) and a basic subunit (CbII). The acidic subunit is non-toxic, and increases the toxicity of the basic subunit. Ca(2+) is required as a cofactor. As to expression, expressed by the venom gland.

Its subcellular location is the secreted. The catalysed reaction is a 1,2-diacyl-sn-glycero-3-phosphocholine + H2O = a 1-acyl-sn-glycero-3-phosphocholine + a fatty acid + H(+). In terms of biological role, heterodimer: presynaptic neurotoxin. Monomer: Snake venom phospholipase A2 (PLA2) is inactive towards micellar phosphatidylcholine but is weakly active towards non-micellar dithiolecithin. PLA2 catalyzes the calcium-dependent hydrolysis of the 2-acyl groups in 3-sn-phosphoglycerides. This Pseudocerastes fieldi (Field's horned viper) protein is Acidic phospholipase A2 CbIalpha.